A 58-amino-acid polypeptide reads, in one-letter code: Large ribosomal subunit protein uL30 (58 aa).

The protein belongs to the universal ribosomal protein uL30 family. In terms of assembly, part of the 50S ribosomal subunit.

The chain is Large ribosomal subunit protein uL30 from Phocaeicola vulgatus (strain ATCC 8482 / DSM 1447 / JCM 5826 / CCUG 4940 / NBRC 14291 / NCTC 11154) (Bacteroides vulgatus).